Consider the following 524-residue polypeptide: Protein MGF 505-2R (524 aa).

Belongs to the asfivirus MGF 505 family.

In terms of biological role, plays a role in virus cell tropism, and may be required for efficient virus replication in macrophages. The polypeptide is Protein MGF 505-2R (Ornithodoros (relapsing fever ticks)).